We begin with the raw amino-acid sequence, 572 residues long: Arginine--tRNA ligase (572 aa).

The short motif at 121 to 131 (PNLAKEMHVGH) is the 'HIGH' region element.

Belongs to the class-I aminoacyl-tRNA synthetase family. In terms of assembly, monomer.

The protein localises to the cytoplasm. It carries out the reaction tRNA(Arg) + L-arginine + ATP = L-arginyl-tRNA(Arg) + AMP + diphosphate. This is Arginine--tRNA ligase from Chromobacterium violaceum (strain ATCC 12472 / DSM 30191 / JCM 1249 / CCUG 213 / NBRC 12614 / NCIMB 9131 / NCTC 9757 / MK).